Here is a 54-residue protein sequence, read N- to C-terminus: Ovomucoid (54 aa).

Residues 4–54 (VDCSDYPKPVCSLEDMPLCGSDSKTYSNKCNFCNAVVDSNGTLTLSHFGKC) enclose the Kazal-like domain. 3 disulfides stabilise this stretch: C6–C36, C14–C33, and C22–C54. N43 carries an N-linked (GlcNAc...) asparagine glycan.

The protein localises to the secreted. In Vultur gryphus (Andean condor), this protein is Ovomucoid.